A 305-amino-acid polypeptide reads, in one-letter code: tRNA pseudouridine synthase B (305 aa).

The Nucleophile role is filled by D39.

Belongs to the pseudouridine synthase TruB family. Type 1 subfamily.

It carries out the reaction uridine(55) in tRNA = pseudouridine(55) in tRNA. Functionally, responsible for synthesis of pseudouridine from uracil-55 in the psi GC loop of transfer RNAs. This chain is tRNA pseudouridine synthase B, found in Staphylococcus haemolyticus (strain JCSC1435).